Reading from the N-terminus, the 171-residue chain is Glucagon family neuropeptides (171 aa).

An N-terminal signal peptide occupies residues M1–S22. The propeptide occupies S23–E76. The important for receptor binding stretch occupies residues V145–L153. Lysine amide is present on K164. Positions V168–L171 are excised as a propeptide.

This sequence belongs to the glucagon family.

It localises to the secreted. Functionally, primary role of GRF is to release GH from the pituitary. PACAP is a neuropeptide involved in diverse array of physiological processes through activating the PACAP subfamily of class B1 G protein-coupled receptors: VIP receptor 1 (VIPR1), VIP receptor 2 (VIPR2), and PACAP type I receptor (ADCYAP1R1). Exerts neuroprotective and general cytoprotective effects due to anti-apoptotic, anti-inflammatory, and antioxidant actions. This chain is Glucagon family neuropeptides (adcyap1), found in Pelophylax ridibundus (Marsh frog).